Here is a 233-residue protein sequence, read N- to C-terminus: Uridylate kinase (233 aa).

9-10 (GS) provides a ligand contact to ATP. Gly-43 is a UMP binding site. ATP-binding residues include Gly-44 and Arg-48. UMP is bound by residues Asp-65 and 113 to 119 (VTPGQTT). The ATP site is built by Thr-139, Tyr-145, and Asp-148.

The protein belongs to the UMP kinase family. Homohexamer.

Its subcellular location is the cytoplasm. It catalyses the reaction UMP + ATP = UDP + ADP. It participates in pyrimidine metabolism; CTP biosynthesis via de novo pathway; UDP from UMP (UMPK route): step 1/1. Its activity is regulated as follows. Inhibited by UTP. Catalyzes the reversible phosphorylation of UMP to UDP. The chain is Uridylate kinase from Methanosarcina barkeri (strain Fusaro / DSM 804).